Reading from the N-terminus, the 47-residue chain is GVSCLCDSDGPSVSGNTLSGIIWLAGCPSGWHNCKAHGPNIGWCCKK.

Cystine bridges form between cysteine 4–cysteine 44, cysteine 6–cysteine 34, and cysteine 27–cysteine 45.

This sequence belongs to the sea anemone sodium channel inhibitory toxin family. Type I subfamily.

It localises to the secreted. It is found in the nematocyst. This Anthopleura xanthogrammica (Giant green sea anemone) protein is Delta-actitoxin-Axm1g.